A 65-amino-acid polypeptide reads, in one-letter code: Photosystem II reaction center protein J (65 aa).

Over residues 1–17 the composition is skewed to basic and acidic residues; it reads MSTKLKGPDGRIPDRLP. Residues 1–20 form a disordered region; it reads MSTKLKGPDGRIPDRLPDGT. A helical membrane pass occupies residues 36-56; that stretch reads LWLVATVGGMAVLSVLGLFFF.

This sequence belongs to the PsbJ family. As to quaternary structure, PSII is composed of 1 copy each of membrane proteins PsbA, PsbB, PsbC, PsbD, PsbE, PsbF, PsbH, PsbI, PsbJ, PsbK, PsbL, PsbM, PsbT, PsbX, PsbY, Psb30/Ycf12, peripheral proteins PsbO, CyanoQ (PsbQ), PsbU, PsbV and a large number of cofactors. It forms dimeric complexes.

It is found in the cellular thylakoid membrane. One of the components of the core complex of photosystem II (PSII). PSII is a light-driven water:plastoquinone oxidoreductase that uses light energy to abstract electrons from H(2)O, generating O(2) and a proton gradient subsequently used for ATP formation. It consists of a core antenna complex that captures photons, and an electron transfer chain that converts photonic excitation into a charge separation. This chain is Photosystem II reaction center protein J, found in Prochlorococcus marinus (strain MIT 9303).